A 745-amino-acid polypeptide reads, in one-letter code: Myeloperoxidase (745 aa).

An N-terminal signal peptide occupies residues 1-48 (MGVPFFSSLRCMVDLGPCWAGGLTAEMKLLLALAGLLAILATPQPSEG). Asn139 is a glycosylation site (N-linked (GlcNAc...) asparagine). Cys167 and Cys180 are oxidised to a cystine. Position 260 (Asp260) interacts with heme b. His261 acts as the Proton acceptor in catalysis. Asp262 serves as a coordination point for Ca(2+). Cystine bridges form between Cys281/Cys291 and Cys285/Cys309. Cysteine sulfenic acid (-SOH) is present on Cys316. The N-linked (GlcNAc...) asparagine glycan is linked to Asn323. Thr334, Phe336, Asp338, and Ser340 together coordinate Ca(2+). 2 N-linked (GlcNAc...) asparagine glycosylation sites follow: Asn355 and Asn391. An intrachain disulfide couples Cys387 to Cys398. The heme b site is built by Glu408 and Met409. Asn483 is a glycosylation site (N-linked (GlcNAc...) asparagine). Residue His502 participates in heme b binding. 2 disulfides stabilise this stretch: Cys606–Cys663 and Cys704–Cys730. Asn729 carries an N-linked (GlcNAc...) asparagine glycan.

This sequence belongs to the peroxidase family. XPO subfamily. Homodimer; disulfide-linked. Each monomer consists of a light and a heavy chain. Found in a complex with CP and LTF; interacts directly with CP, which protects CP antioxidant properties by MPO. It depends on Ca(2+) as a cofactor. Requires heme b as cofactor.

The protein localises to the lysosome. The enzyme catalyses chloride + H2O2 + H(+) = hypochlorous acid + H2O. In terms of biological role, part of the host defense system of polymorphonuclear leukocytes. It is responsible for microbicidal activity against a wide range of organisms. In the stimulated PMN, MPO catalyzes the production of hypohalous acids, primarily hypochlorous acid in physiologic situations, and other toxic intermediates that greatly enhance PMN microbicidal activity. Mediates the proteolytic cleavage of alpha-1-microglobulin to form t-alpha-1-microglobulin, which potently inhibits oxidation of low-density lipoprotein particles and limits vascular damage. This is Myeloperoxidase from Homo sapiens (Human).